We begin with the raw amino-acid sequence, 293 residues long: tRNA(His) guanylyltransferase (293 aa).

Residues aspartate 29, glycine 30, and aspartate 76 each coordinate Mg(2+). Residues 29 to 34 (DGRGFT) and 75 to 76 (SD) each bind GTP. A disordered region spans residues 226-252 (KKVSEEEAEEMSSSAVPEVKSKSQVEK).

Belongs to the tRNA(His) guanylyltransferase family. It depends on Mg(2+) as a cofactor.

It catalyses the reaction a 5'-end ribonucleotide-tRNA(His) + GTP + ATP + H2O = a 5'-end phospho-guanosine-ribonucleotide-tRNA(His) + AMP + 2 diphosphate + H(+). Functionally, adds a GMP to the 5'-end of tRNA(His) after transcription and RNase P cleavage. The chain is tRNA(His) guanylyltransferase (rgt-1) from Neurospora crassa (strain ATCC 24698 / 74-OR23-1A / CBS 708.71 / DSM 1257 / FGSC 987).